A 403-amino-acid polypeptide reads, in one-letter code: Prostaglandin E2 receptor EP1 subtype (403 aa).

The Extracellular segment spans residues 1–38 (MSLCGPLNLSLAGEATPCAEPGAPNASAWPPSGRASAS). N-linked (GlcNAc...) asparagine glycosylation is found at asparagine 8 and asparagine 25. Residues 39-65 (PALPIFSMTLGAVSNVLALALLAQAAG) form a helical membrane-spanning segment. Residues 66–75 (RLRRRRSAAT) lie on the Cytoplasmic side of the membrane. A helical membrane pass occupies residues 76-99 (FLLFVASLLATDLAGHVIPGALVL). Over 100–114 (RLYAAGRSPAGGACH) the chain is Extracellular. The cysteines at positions 113 and 191 are disulfide-linked. The helical transmembrane segment at 115-136 (FLGGCMVFFGLCPLLLGCGMAV) threads the bilayer. At 137 to 158 (ERCVGVTRPLLHAARVSAARAR) the chain is on the cytoplasmic side. Residues 159–180 (LALAVLAALALAVALLPLARVG) traverse the membrane as a helical segment. At 181–204 (RYELQYPGTWCFIGLRPAGGWRQA) the chain is on the extracellular side. The chain crosses the membrane as a helical span at residues 205–230 (LLAGLFAGLGLAALLAALVCNTLSGL). Residues 231 to 295 (ALLRARWRRR…ARRARAHDVE (65 aa)) are Cytoplasmic-facing. The disordered stretch occupies residues 243–287 (RRRPQACGPDGRRHWGARAPRSASASSSSSVASVPGGSPGRGSAR). The span at 259–278 (ARAPRSASASSSSSVASVPG) shows a compositional bias: low complexity. Residues 296–322 (MVGQLVGIMVVSCICWSPLLVLVVLAV) traverse the membrane as a helical segment. At 323–333 (GGWGSSSLQRP) the chain is on the extracellular side. The chain crosses the membrane as a helical span at residues 334 to 355 (LFLAVRLASWNQILDPWVYILL). Topologically, residues 356–403 (RQAVLRQLLRLLPPRPGAKGSPAGLALTRSAWEASSLRSSRHSSLSHL) are cytoplasmic.

The protein belongs to the G-protein coupled receptor 1 family.

It is found in the cell membrane. In terms of biological role, receptor for prostaglandin E2 (PGE2). The activity of this receptor is mediated by G(q) proteins which activate a phosphatidylinositol-calcium second messenger system. May play a role as an important modulator of renal function. Implicated the smooth muscle contractile response to PGE2 in various tissues. In Canis lupus familiaris (Dog), this protein is Prostaglandin E2 receptor EP1 subtype (PTGER1).